The sequence spans 31 residues: Photosystem II reaction center protein T (31 aa).

A helical membrane pass occupies residues 3–23; that stretch reads ALVYTFLLIGTLGIIFFAIFF.

This sequence belongs to the PsbT family. In terms of assembly, PSII is composed of 1 copy each of membrane proteins PsbA, PsbB, PsbC, PsbD, PsbE, PsbF, PsbH, PsbI, PsbJ, PsbK, PsbL, PsbM, PsbT, PsbY, PsbZ, Psb30/Ycf12, at least 3 peripheral proteins of the oxygen-evolving complex and a large number of cofactors. It forms dimeric complexes.

It localises to the plastid. Its subcellular location is the chloroplast thylakoid membrane. Functionally, found at the monomer-monomer interface of the photosystem II (PS II) dimer, plays a role in assembly and dimerization of PSII. PSII is a light-driven water plastoquinone oxidoreductase, using light energy to abstract electrons from H(2)O, generating a proton gradient subsequently used for ATP formation. This is Photosystem II reaction center protein T from Tetradesmus obliquus (Green alga).